The sequence spans 972 residues: Translation initiation factor IF-2 (972 aa).

Residues 48–63 are compositionally biased toward basic and acidic residues; that stretch reads DHLRKSHGATDGDKRK. Disordered regions lie at residues 48–85 and 99–385; these read DHLR…KART and RDDV…QAPT. Low complexity predominate over residues 105–114; the sequence is GAEQGQAQVA. Residues 121–181 are compositionally biased toward basic and acidic residues; the sequence is ELKRREEEAR…EEEAAAKRVA (61 aa). Positions 182 to 205 are enriched in low complexity; it reads AEAAAAQQQAAAQQAAAAEQQEAA. A compositionally biased stretch (basic and acidic residues) spans 212–263; it reads DEARAAAERAAQREAAKKAEDAAREAADKARAEQEEISKRRAAAEAEARAIR. Over residues 279–288 the composition is skewed to pro residues; it reads PPKPVEPPKP. Over residues 313-328 the composition is skewed to low complexity; it reads PAGAAAPATTAPAGAG. The span at 357–370 shows a compositional bias: gly residues; it reads SSGGVDRGWRGGPK. The region spanning 472–641 is the tr-type G domain; that stretch reads PRPPVVTVMG…LLQAEVLELK (170 aa). The G1 stretch occupies residues 481–488; it reads GHVDHGKT. 481–488 provides a ligand contact to GTP; sequence GHVDHGKT. The G2 stretch occupies residues 506–510; the sequence is GITQH. The tract at residues 527–530 is G3; it reads DTPG. Residues 527–531 and 581–584 contribute to the GTP site; these read DTPGH and NKID. The segment at 581 to 584 is G4; that stretch reads NKID. The tract at residues 617–619 is G5; it reads SAK.

The protein belongs to the TRAFAC class translation factor GTPase superfamily. Classic translation factor GTPase family. IF-2 subfamily.

It localises to the cytoplasm. Functionally, one of the essential components for the initiation of protein synthesis. Protects formylmethionyl-tRNA from spontaneous hydrolysis and promotes its binding to the 30S ribosomal subunits. Also involved in the hydrolysis of GTP during the formation of the 70S ribosomal complex. In Burkholderia lata (strain ATCC 17760 / DSM 23089 / LMG 22485 / NCIMB 9086 / R18194 / 383), this protein is Translation initiation factor IF-2.